Consider the following 218-residue polypeptide: Cytochrome b6 (218 aa).

A helical transmembrane segment spans residues 35-55 (IFYCLGGITLVCFLIQFATGF). Position 38 (C38) interacts with heme c. Heme b-binding residues include H89 and H103. 3 helical membrane passes run 93-113 (ASMM…TGGF), 119-139 (LTWV…VTGY), and 189-209 (LHTF…FLMI). 2 residues coordinate heme b: H190 and H205.

This sequence belongs to the cytochrome b family. PetB subfamily. In terms of assembly, the 4 large subunits of the cytochrome b6-f complex are cytochrome b6, subunit IV (17 kDa polypeptide, PetD), cytochrome f and the Rieske protein, while the 4 small subunits are PetG, PetL, PetM and PetN. The complex functions as a dimer. Heme b serves as cofactor. Requires heme c as cofactor.

It is found in the cellular thylakoid membrane. Component of the cytochrome b6-f complex, which mediates electron transfer between photosystem II (PSII) and photosystem I (PSI), cyclic electron flow around PSI, and state transitions. The polypeptide is Cytochrome b6 (Synechococcus sp. (strain CC9605)).